A 279-amino-acid chain; its full sequence is NADPH-dependent 7-cyano-7-deazaguanine reductase (279 aa).

86–88 (IES) lines the substrate pocket. 88-89 (SK) is an NADPH binding site. Catalysis depends on cysteine 186, which acts as the Thioimide intermediate. Aspartate 193 acts as the Proton donor in catalysis. Residue 225–226 (HE) coordinates substrate. Position 254–255 (254–255 (RG)) interacts with NADPH.

It belongs to the GTP cyclohydrolase I family. QueF type 2 subfamily. Homodimer.

The protein resides in the cytoplasm. It catalyses the reaction 7-aminomethyl-7-carbaguanine + 2 NADP(+) = 7-cyano-7-deazaguanine + 2 NADPH + 3 H(+). It functions in the pathway tRNA modification; tRNA-queuosine biosynthesis. Its function is as follows. Catalyzes the NADPH-dependent reduction of 7-cyano-7-deazaguanine (preQ0) to 7-aminomethyl-7-deazaguanine (preQ1). The protein is NADPH-dependent 7-cyano-7-deazaguanine reductase of Chromobacterium violaceum (strain ATCC 12472 / DSM 30191 / JCM 1249 / CCUG 213 / NBRC 12614 / NCIMB 9131 / NCTC 9757 / MK).